The sequence spans 451 residues: UBP1-associated protein 2B (451 aa).

The tract at residues 1-86 (MTKKRKLESE…GNEDDDEEEP (86 aa)) is disordered. Composition is skewed to basic and acidic residues over residues 25 to 38 (CEKE…VDNQ) and 49 to 63 (DTLK…KGED). Positions 67–77 (AETSSGSGNQG) are enriched in polar residues. RRM domains lie at 128 to 236 (RKIF…NVSA) and 227 to 314 (RKIY…QHQH). Disordered stretches follow at residues 302-335 (ANDG…GYGA) and 423-451 (GGYQ…YMGR). The span at 431–451 (GQGGAGRGQHGAGYGGPYMGR) shows a compositional bias: gly residues.

As to expression, expressed in shoot meristem and flowers.

It localises to the nucleus. Heterogeneous nuclear ribonucleoprotein (hnRNP)-like protein that acts as a component of a complex regulating the turnover of mRNAs in the nucleus. Binds with high affinity to RNA molecules that contain U-rich sequences in 3'-UTRs. May function in complex with UBP1 and contribute to the stabilization of mRNAs in the nucleus. The protein is UBP1-associated protein 2B (UBA2B) of Arabidopsis thaliana (Mouse-ear cress).